A 454-amino-acid polypeptide reads, in one-letter code: tRNA modification GTPase MnmE (454 aa).

Residues arginine 23, glutamate 80, and lysine 120 each contribute to the (6S)-5-formyl-5,6,7,8-tetrahydrofolate site. Residues 216–377 form the TrmE-type G domain; that stretch reads GMKVVIAGRP…LRNHLKQSMG (162 aa). Asparagine 226 serves as a coordination point for K(+). Residues 226–231, 245–251, 270–273, 335–338, and 358–360 each bind GTP; these read NAGKSS, TDIAGTT, DTAG, NKAD, and SAR. Serine 230 is a Mg(2+) binding site. K(+)-binding residues include threonine 245, isoleucine 247, and threonine 250. Threonine 251 contributes to the Mg(2+) binding site. Lysine 454 is a (6S)-5-formyl-5,6,7,8-tetrahydrofolate binding site.

Belongs to the TRAFAC class TrmE-Era-EngA-EngB-Septin-like GTPase superfamily. TrmE GTPase family. Homodimer. Heterotetramer of two MnmE and two MnmG subunits. Requires K(+) as cofactor.

It localises to the cytoplasm. Functionally, exhibits a very high intrinsic GTPase hydrolysis rate. Involved in the addition of a carboxymethylaminomethyl (cmnm) group at the wobble position (U34) of certain tRNAs, forming tRNA-cmnm(5)s(2)U34. This Salmonella typhi protein is tRNA modification GTPase MnmE.